A 301-amino-acid chain; its full sequence is Protein FdhE homolog (301 aa).

Belongs to the FdhE family.

Its subcellular location is the cytoplasm. Its function is as follows. Necessary for formate dehydrogenase activity. The protein is Protein FdhE homolog of Shewanella baltica (strain OS223).